Reading from the N-terminus, the 246-residue chain is Ribulose-phosphate 3-epimerase (246 aa).

Ser-9 lines the substrate pocket. A divalent metal cation contacts are provided by His-34, Asp-36, and His-83. Asp-36 functions as the Proton acceptor in the catalytic mechanism. Residues His-83, 159–162 (GFGG), 188–190 (DGG), and 210–212 (GTS) contribute to the substrate site. Asp-188 lines the a divalent metal cation pocket. The Proton donor role is filled by Asp-188.

This sequence belongs to the ribulose-phosphate 3-epimerase family. Co(2+) serves as cofactor. The cofactor is Fe(2+). It depends on Mn(2+) as a cofactor. Zn(2+) is required as a cofactor.

It catalyses the reaction D-ribulose 5-phosphate = D-xylulose 5-phosphate. Its pathway is carbohydrate degradation; pentose phosphate pathway; D-xylulose 5-phosphate from D-ribulose 5-phosphate (non-oxidative stage): step 1/1. Functionally, catalyzes the reversible epimerization of D-ribulose 5-phosphate to D-xylulose 5-phosphate. The chain is Ribulose-phosphate 3-epimerase (RPE1) from Candida glabrata (strain ATCC 2001 / BCRC 20586 / JCM 3761 / NBRC 0622 / NRRL Y-65 / CBS 138) (Yeast).